The sequence spans 422 residues: Enolase (422 aa).

Gln162 contacts (2R)-2-phosphoglycerate. Catalysis depends on Glu204, which acts as the Proton donor. Residues Asp241, Glu285, and Asp312 each coordinate Mg(2+). The (2R)-2-phosphoglycerate site is built by Lys337, Arg366, Ser367, and Lys388. Catalysis depends on Lys337, which acts as the Proton acceptor.

It belongs to the enolase family. It depends on Mg(2+) as a cofactor.

Its subcellular location is the cytoplasm. It localises to the secreted. It is found in the cell surface. It catalyses the reaction (2R)-2-phosphoglycerate = phosphoenolpyruvate + H2O. It functions in the pathway carbohydrate degradation; glycolysis; pyruvate from D-glyceraldehyde 3-phosphate: step 4/5. Catalyzes the reversible conversion of 2-phosphoglycerate (2-PG) into phosphoenolpyruvate (PEP). It is essential for the degradation of carbohydrates via glycolysis. The sequence is that of Enolase from Wolinella succinogenes (strain ATCC 29543 / DSM 1740 / CCUG 13145 / JCM 31913 / LMG 7466 / NCTC 11488 / FDC 602W) (Vibrio succinogenes).